A 300-amino-acid chain; its full sequence is C-4 methylsterol oxidase erg25 (300 aa).

Residues 140-276 (TLFFFLEDTW…FRWWDAVLKT (137 aa)) enclose the Fatty acid hydroxylase domain. The Histidine box-1 motif lies at 154–158 (HRLFH). A Histidine box-2 motif is present at residues 167 to 171 (HKVHH). The chain crosses the membrane as a helical span at residues 186-206 (PLEIILLGAGTVFVPLMWCYF). The Histidine box-3 motif lies at 251-257 (HHDYHHM).

It belongs to the sterol desaturase family. As to quaternary structure, heterotetramer of erg25, erg26, erg27 and erg28. Erg28 acts as a scaffold to tether erg27 and other 4,4-demethylation-related enzymes, forming a demethylation enzyme complex, in the endoplasmic reticulum. Requires Fe cation as cofactor.

The protein resides in the endoplasmic reticulum membrane. The catalysed reaction is 4,4-dimethyl-5alpha-cholesta-8,24-dien-3beta-ol + 6 Fe(II)-[cytochrome b5] + 3 O2 + 5 H(+) = 4beta-methylzymosterol-4alpha-carboxylate + 6 Fe(III)-[cytochrome b5] + 4 H2O. It carries out the reaction 4alpha-methylzymosterol + 6 Fe(II)-[cytochrome b5] + 3 O2 + 5 H(+) = 4alpha-carboxyzymosterol + 6 Fe(III)-[cytochrome b5] + 4 H2O. It participates in steroid biosynthesis; zymosterol biosynthesis; zymosterol from lanosterol: step 3/6. Its pathway is steroid metabolism; ergosterol biosynthesis. In terms of biological role, C-4 methylsterol oxidase; part of the third module of ergosterol biosynthesis pathway that includes by the late steps of the pathway. Erg25 is a catalytic component of the C-4 demethylation complex that catalyzes the three-step monooxygenation required for the demethylation of 4,4-dimethyl and 4alpha-methylsterols. The third module or late pathway involves the ergosterol synthesis itself through consecutive reactions that mainly occur in the endoplasmic reticulum (ER) membrane. Firstly, the squalene synthase erg9 catalyzes the condensation of 2 farnesyl pyrophosphate moieties to form squalene, which is the precursor of all steroids. Secondly, squalene is converted into lanosterol by the consecutive action of the squalene epoxidase erg1 and the lanosterol synthase erg7. The lanosterol 14-alpha-demethylase erg11/cyp1 catalyzes C14-demethylation of lanosterol to produce 4,4'-dimethyl cholesta-8,14,24-triene-3-beta-ol. In the next steps, a complex process involving various demethylation, reduction and desaturation reactions catalyzed by the C-14 reductase erg24 and the C-4 demethylation complex erg25-erg26-erg27 leads to the production of zymosterol. Erg28 likely functions in the C-4 demethylation complex reaction by tethering erg26 and Erg27 to the endoplasmic reticulum or to facilitate interaction between these proteins. Then, the sterol 24-C-methyltransferase erg6 catalyzes the methyl transfer from S-adenosyl-methionine to the C-24 of zymosterol to form fecosterol. The C-8 sterol isomerase erg2 catalyzes the reaction which results in unsaturation at C-7 in the B ring of sterols and thus converts fecosterol to episterol. The sterol-C5-desaturases erg31 and erg32 then catalyze the introduction of a C-5 double bond in the B ring to produce 5-dehydroepisterol. The C-22 sterol desaturase erg5 further converts 5-dehydroepisterol into ergosta-5,7,22,24(28)-tetraen-3beta-ol by forming the C-22(23) double bond in the sterol side chain. Finally, ergosta-5,7,22,24(28)-tetraen-3beta-ol is substrate of the C-24(28) sterol reductase erg4 to produce ergosterol. In the genus Schizosaccharomyces, a second route exists between lanosterol and fecosterol, via the methylation of lanosterol to eburicol by erg6, followed by C14-demethylation by erg11/cyp1 and C4-demethylation by the demethylation complex erg25-erg26-erg27. This Schizosaccharomyces pombe (strain 972 / ATCC 24843) (Fission yeast) protein is C-4 methylsterol oxidase erg25.